The primary structure comprises 289 residues: Syntaxin-2 (289 aa).

The Cytoplasmic portion of the chain corresponds to 1 to 265; that stretch reads MRDRLPDLTA…KYQSKARRKK (265 aa). Residues 68-101 are a coiled coil; sequence EGKIKEELEDLDKEIKKTANRIRGKLKSIEQSCD. In terms of domain architecture, t-SNARE coiled-coil homology spans 192–254; that stretch reads LNEIESRHKD…EHAKEETKKA (63 aa). The chain crosses the membrane as a helical; Anchor for type IV membrane protein span at residues 266–289; it reads WIIAAVAVAVIAVLALIIGLSVGK.

Belongs to the syntaxin family. In terms of assembly, interacts with SYT6 and SYT8; the interaction is Ca(2+)-dependent.

Its subcellular location is the membrane. In terms of biological role, essential for epithelial morphogenesis. May mediate Ca(2+)-regulation of exocytosis acrosomal reaction in sperm. The protein is Syntaxin-2 (Stx2) of Mus musculus (Mouse).